Consider the following 470-residue polypeptide: Uronate isomerase (470 aa).

It belongs to the metallo-dependent hydrolases superfamily. Uronate isomerase family.

It catalyses the reaction D-glucuronate = D-fructuronate. The enzyme catalyses aldehydo-D-galacturonate = keto-D-tagaturonate. Its pathway is carbohydrate metabolism; pentose and glucuronate interconversion. The sequence is that of Uronate isomerase from Shigella boydii serotype 4 (strain Sb227).